The following is a 467-amino-acid chain: Rhamnulokinase (467 aa).

Residue A11 to R15 participates in ATP binding. Residues A78 and H235 to T237 each bind substrate. Catalysis depends on D236, which acts as the Proton acceptor. T257 lines the ATP pocket. N294 contacts substrate. Q302 serves as a coordination point for ATP. C351 and C368 are disulfide-bonded. G400 contacts ATP.

It belongs to the rhamnulokinase family. The cofactor is Mg(2+).

It carries out the reaction L-rhamnulose + ATP = L-rhamnulose 1-phosphate + ADP + H(+). It participates in carbohydrate degradation; L-rhamnose degradation; glycerone phosphate from L-rhamnose: step 2/3. Functionally, involved in the catabolism of L-rhamnose (6-deoxy-L-mannose). Catalyzes the transfer of the gamma-phosphate group from ATP to the 1-hydroxyl group of L-rhamnulose to yield L-rhamnulose 1-phosphate. This Halalkalibacterium halodurans (strain ATCC BAA-125 / DSM 18197 / FERM 7344 / JCM 9153 / C-125) (Bacillus halodurans) protein is Rhamnulokinase.